The following is a 1075-amino-acid chain: MDYLKYGIEVVVKKSEKRKFKLIDYKNIDKNTFFYLCEAEFKGNPKNSRPDITLFINGIPVVIIEAKATLKIDSHLEGISQIRRYEKFSPDLFRFVQFAISYGEEQLYTPTMPNWYKENIHLPAYYWRIRQKINGKKVVKDDIFYILNPSILLEIIRYFIFYRKDEYSKTKTLSKIIARYNQYFATKKAMKRIDEYLSGDSKNKGLIWHWQGSGKTYTMFFIANYFLDKYFSENPVIFFVVDRVDLERQSKEFYEAIQEKKFKTILKRIDSINKLYEVIKSIKMSELSNKVIVRGIYTTTIQKFQYERSKKEKDNNKEKDKDDEDLDLSKPIEEIIKKIEDKLKKEEKEGKIKGLKDLLIILAFIYLKHLKEKNPEEYKKHIENLKKLKDKDKKEEYLINLGNIKRKHILILIDEAHRTQYGILGGMRKITFPNAITFGFTGTPVFKNEKNTFTEFSYPEKGEFYLDVYFIGDSIKDKFTLPLTYQIVKEGDIKSEGIQITLDEEDIKEFIDEWIKRGEDINLFDRKKLPKYINKSKTILLNPKRIDKVAKYIVDRIEEDTENFKFKAMVVAVNRLGCVRFKKALDKYLKEKFGDEAEKWAEVVMTYHHNEEEKEIIEYMKKLKKERNSNDFNEINQIIREEFLNSENPKILIVTDMLLTGFDAPRLKVMYLDKPLYGHRLLQAIARTNRPYPDKEFGLIVDSVGLFKVLTETMALYNMLAEEEIREDFKNNLISSIDEIFQEFKLKLEMVKESLKNLKINDEDLSIDVNTLKTLTKNKDFNNNELKEKLDLIAFYAEDGKNARILKLIDDLKAVIKLYKALGSYPQKIFYIEDIELLSFIYAYLIKKLKPKKKSNRKFWEELISFIHNKMLVDDLTVIEEINLNPDDLDKILKENIGKREIKRAVANYYFILKNSILDKQHDPIYKEILERLERLRRDWIMKRIDDKIYLNAIKNLMELKNNYDKKIKGKSSIERIKESISTYIGENILKDQDIKLNLENTEKLITKMQNLNKLSKLQRKKFKKELSCALLEDLLKELKGKIKDEDAKKVAELSDNLVSEFILKEIWGENYENQ.

This sequence belongs to the HsdR family. As to quaternary structure, the type I restriction/modification system is composed of three polypeptides R, M and S.

It catalyses the reaction Endonucleolytic cleavage of DNA to give random double-stranded fragments with terminal 5'-phosphates, ATP is simultaneously hydrolyzed.. Its function is as follows. The restriction (R) subunit of a type I restriction enzyme that recognizes 5'-CAAN(7)TGG-3' and cleaves a random distance away. The R subunit is required for both endonuclease and ATPase activities but not for modification. After locating a non-methylated recognition site, the enzyme complex serves as a molecular motor that translocates DNA in an ATP-dependent manner until a collision occurs that triggers cleavage. The chain is Putative type I restriction enzyme MjaVIIP endonuclease subunit from Methanocaldococcus jannaschii (strain ATCC 43067 / DSM 2661 / JAL-1 / JCM 10045 / NBRC 100440) (Methanococcus jannaschii).